A 66-amino-acid chain; its full sequence is Large ribosomal subunit protein bL33c (66 aa).

This sequence belongs to the bacterial ribosomal protein bL33 family.

Its subcellular location is the plastid. The protein resides in the chloroplast. In Crucihimalaya wallichii (Rock-cress), this protein is Large ribosomal subunit protein bL33c.